Here is a 101-residue protein sequence, read N- to C-terminus: MKTKLKVGDNVKILCGKDRGKTGEVVSIDRKNLKVIVKSCNMVKKVVKARTPQEKSKIIDKEAPIDISNVMLFSSGIASRIGFKFENNEKKRYLKKNGENV.

This sequence belongs to the universal ribosomal protein uL24 family. As to quaternary structure, part of the 50S ribosomal subunit.

In terms of biological role, one of two assembly initiator proteins, it binds directly to the 5'-end of the 23S rRNA, where it nucleates assembly of the 50S subunit. Its function is as follows. One of the proteins that surrounds the polypeptide exit tunnel on the outside of the subunit. The chain is Large ribosomal subunit protein uL24 from Borrelia turicatae (strain 91E135).